A 234-amino-acid polypeptide reads, in one-letter code: MPIYLLSDEHPELFPPPERADKSGVVAVGGDLRPERLLAAYARGIFPWYSEGDPILWHSPDPRFVLSPDKLHVGRSLRKTMARGIYEVRYDTAFRRVITECSQVPRPGQTGTWITEEMMEAYVTLHEAGFAHSVEAWAEGELKGGLYGVSLGAAFFGESMFALAPDASKVAFVTAAERFQGWGFQLIDCQVETEHLARFGAENWPRRRFLSALARAMKEPTRRGKWTEGAAADP.

The protein belongs to the L/F-transferase family.

It is found in the cytoplasm. It catalyses the reaction N-terminal L-lysyl-[protein] + L-leucyl-tRNA(Leu) = N-terminal L-leucyl-L-lysyl-[protein] + tRNA(Leu) + H(+). The enzyme catalyses N-terminal L-arginyl-[protein] + L-leucyl-tRNA(Leu) = N-terminal L-leucyl-L-arginyl-[protein] + tRNA(Leu) + H(+). The catalysed reaction is L-phenylalanyl-tRNA(Phe) + an N-terminal L-alpha-aminoacyl-[protein] = an N-terminal L-phenylalanyl-L-alpha-aminoacyl-[protein] + tRNA(Phe). Functions in the N-end rule pathway of protein degradation where it conjugates Leu, Phe and, less efficiently, Met from aminoacyl-tRNAs to the N-termini of proteins containing an N-terminal arginine or lysine. In Myxococcus xanthus (strain DK1622), this protein is Leucyl/phenylalanyl-tRNA--protein transferase.